Here is a 636-residue protein sequence, read N- to C-terminus: Ligand-gated ion channel 4 (636 aa).

A signal peptide spans 1-25 (MVICHSCTTFCILLVIDLVPCRIVG). At 26-326 (MENVENRVMF…IHMHRRPLFY (301 aa)) the chain is on the extracellular side. N-linked (GlcNAc...) asparagine glycosylation is found at asparagine 45, asparagine 141, asparagine 179, and asparagine 227. Cysteine 240 and cysteine 254 are joined by a disulfide. An N-linked (GlcNAc...) asparagine glycan is attached at asparagine 284. Transmembrane regions (helical) follow at residues 327 to 347 (VFNHIVPCVLISSMAVLGFLM), 357 to 377 (MIITTLLSMGVYLQSITESIP), and 383 to 403 (VPLIGMYYVSSLLMVCLATCV). The Cytoplasmic segment spans residues 404–602 (NVITLNMHRN…QLASVVDRLL (199 aa)). The chain crosses the membrane as a helical span at residues 603 to 623 (LCLFCTATLFTIICLLIVPVV).

This sequence belongs to the ligand-gated ion channel (TC 1.A.9) family.

It localises to the postsynaptic cell membrane. It is found in the cell membrane. Functionally, acetylcholine receptor. In Caenorhabditis briggsae, this protein is Ligand-gated ion channel 4.